A 193-amino-acid polypeptide reads, in one-letter code: Acyl carrier protein phosphodiesterase (193 aa).

It belongs to the AcpH family.

It catalyses the reaction holo-[ACP] + H2O = apo-[ACP] + (R)-4'-phosphopantetheine + H(+). In terms of biological role, converts holo-ACP to apo-ACP by hydrolytic cleavage of the phosphopantetheine prosthetic group from ACP. This Klebsiella pneumoniae (strain 342) protein is Acyl carrier protein phosphodiesterase.